We begin with the raw amino-acid sequence, 58 residues long: LAMAMGDAVADAQARAMAAAYAIAGKEKEKLKQCFKDMTLAAIDYAKHKVEKHLFKCI.

Residues Leu-1–Ala-24 constitute a propeptide that is removed on maturation. Cys-34 and Cys-57 form a disulfide bridge.

This sequence belongs to the formicidae venom precursor-01 superfamily. Expressed by the venom gland.

The protein resides in the secreted. It is found in the target cell membrane. In terms of biological role, neurotoxin that causes irreversible rapid flaccid paralysis in blowflies and honeybees upon intrathoracic injection. Causes a quick and irreversible cytolytic effect (at 10 uM) indicating it possibly acts as a pore-forming peptide. Shows only weak effect on aphids (A.pisum) at high doses 24 hours post intrathoracic injection. In vitro, is not cytotoxic on the dipteran S2 Drosophila embryonic cell line. This Tetramorium bicarinatum (Tramp ant) protein is U11-myrmicitoxin-Tb1a.